The following is a 66-amino-acid chain: Protein translocase subunit SecE (66 aa).

A helical transmembrane segment spans residues 29-49; that stretch reads LVASTLVVVVAVFIFSLTCLV.

It belongs to the SecE/SEC61-gamma family. Component of the Sec protein translocase complex. Heterotrimer consisting of SecY, SecE and SecG subunits. The heterotrimers can form oligomers, although 1 heterotrimer is thought to be able to translocate proteins. Interacts with the ribosome. Interacts with SecDF, and other proteins may be involved. Interacts with SecA.

Its subcellular location is the cell inner membrane. Its function is as follows. Essential subunit of the Sec protein translocation channel SecYEG. Clamps together the 2 halves of SecY. May contact the channel plug during translocation. This chain is Protein translocase subunit SecE, found in Rickettsia rickettsii.